We begin with the raw amino-acid sequence, 198 residues long: Recombination protein RecR (198 aa).

The C4-type zinc-finger motif lies at 59–74 (CSLCCNYTDHDPCPIC). The Toprim domain occupies 82–175 (TLLCIVEQPR…KVTRIAHGLP (94 aa)).

Belongs to the RecR family.

May play a role in DNA repair. It seems to be involved in an RecBC-independent recombinational process of DNA repair. It may act with RecF and RecO. The polypeptide is Recombination protein RecR (Desulfitobacterium hafniense (strain DSM 10664 / DCB-2)).